A 259-amino-acid chain; its full sequence is Global transcriptional regulator CodY (259 aa).

The tract at residues 1-155 (MALLQKTRII…GATVVGMEIL (155 aa)) is GAF domain. Residues 203-222 (ASKIADRVGITRSVIVNALR) constitute a DNA-binding region (H-T-H motif). Position 215 is a phosphoserine (Ser215).

The protein belongs to the CodY family.

It is found in the cytoplasm. Its function is as follows. DNA-binding global transcriptional regulator which is involved in the adaptive response to starvation and acts by directly or indirectly controlling the expression of numerous genes in response to nutrient availability. During rapid exponential growth, CodY is highly active and represses genes whose products allow adaptation to nutrient depletion. The polypeptide is Global transcriptional regulator CodY (Bacillus velezensis (strain DSM 23117 / BGSC 10A6 / LMG 26770 / FZB42) (Bacillus amyloliquefaciens subsp. plantarum)).